We begin with the raw amino-acid sequence, 514 residues long: 1-pyrroline-5-carboxylate dehydrogenase (514 aa).

Residues E286 and C320 contribute to the active site.

The protein belongs to the aldehyde dehydrogenase family. RocA subfamily.

It carries out the reaction L-glutamate 5-semialdehyde + NAD(+) + H2O = L-glutamate + NADH + 2 H(+). It participates in amino-acid degradation; L-proline degradation into L-glutamate; L-glutamate from L-proline: step 2/2. The polypeptide is 1-pyrroline-5-carboxylate dehydrogenase (Staphylococcus haemolyticus (strain JCSC1435)).